The primary structure comprises 332 residues: tRNA-dihydrouridine(20/20a) synthase (332 aa).

FMN contacts are provided by residues 19 to 21 (PML) and Gln-71. The active-site Proton donor is the Cys-101. FMN contacts are provided by residues Lys-140, His-173, 213–215 (NGG), and 235–236 (GR).

This sequence belongs to the Dus family. DusA subfamily. The cofactor is FMN.

The catalysed reaction is 5,6-dihydrouridine(20) in tRNA + NADP(+) = uridine(20) in tRNA + NADPH + H(+). It catalyses the reaction 5,6-dihydrouridine(20) in tRNA + NAD(+) = uridine(20) in tRNA + NADH + H(+). The enzyme catalyses 5,6-dihydrouridine(20a) in tRNA + NADP(+) = uridine(20a) in tRNA + NADPH + H(+). It carries out the reaction 5,6-dihydrouridine(20a) in tRNA + NAD(+) = uridine(20a) in tRNA + NADH + H(+). Its function is as follows. Catalyzes the synthesis of 5,6-dihydrouridine (D), a modified base found in the D-loop of most tRNAs, via the reduction of the C5-C6 double bond in target uridines. Specifically modifies U20 and U20a in tRNAs. The polypeptide is tRNA-dihydrouridine(20/20a) synthase (Salmonella typhi).